The primary structure comprises 446 residues: MSVAVPFAPSPTGLLHVGNVRLALVNWLFARKAGGNFLVRLDDTDEERSKPEYAEGIERDLTWLGLTWDRFARESDRYGATDEVAAALKASGRLYPCYETPEELNLKRASLSSQGRPPIYDRAALRLGDADRARLEAEGRKPHWRFKLEHTPVEWTDLVRGPVHFEGSALSDPVLIAEDGRPLYTLTSVVDDADLAITHVIRGEDHLANTAVQIQIFEAVGGAVPVFAHLPLLTDATGQGLSKRLGSLSVASLREEEGIEPMALASLLAKLGTSDAIEPRLTLDELVAEFDIAKVSRATPKFDPEELLRLNARILHLLPFERVAGELAASVWMMPTPAFWEAVPNLSRVAEARDWWAVTHAPVARRRTIPLFLAEAATLLPKEPWDLSTWGTWTGAVKAKTGRKGKDLFLPLRRALTGRDHGGQLKNLLPLIGRTRAHKRLAGETA.

The 'HIGH' region motif lies at Pro9 to Asn19. The short motif at Gly240–Arg244 is the 'KMSKS' region element. Residue Lys243 participates in ATP binding.

It belongs to the class-I aminoacyl-tRNA synthetase family. Glutamate--tRNA ligase type 1 subfamily. As to quaternary structure, monomer.

The protein localises to the cytoplasm. It catalyses the reaction tRNA(Glu) + L-glutamate + ATP = L-glutamyl-tRNA(Glu) + AMP + diphosphate. Catalyzes the attachment of glutamate to tRNA(Glu) in a two-step reaction: glutamate is first activated by ATP to form Glu-AMP and then transferred to the acceptor end of tRNA(Glu). The polypeptide is Glutamate--tRNA ligase (Azospirillum brasilense).